The primary structure comprises 152 residues: UPF0735 ACT domain-containing protein CTC_00116 (152 aa).

An ACT domain is found at 76-151 (IISVTLNHRP…NVIKLDLIAM (76 aa)).

This sequence belongs to the UPF0735 family.

In Clostridium tetani (strain Massachusetts / E88), this protein is UPF0735 ACT domain-containing protein CTC_00116.